The chain runs to 132 residues: Small ribosomal subunit protein uS11 (132 aa).

Positions 113–132 are disordered; the sequence is VTPIPHDGTRAPGGKRGRRV.

The protein belongs to the universal ribosomal protein uS11 family. In terms of assembly, part of the 30S ribosomal subunit.

Located on the platform of the 30S subunit. The chain is Small ribosomal subunit protein uS11 from Methanocella arvoryzae (strain DSM 22066 / NBRC 105507 / MRE50).